Consider the following 165-residue polypeptide: P2Y purinoceptor 4 (165 aa).

A helical membrane pass occupies residues 1 to 16 (SDTLYVLSLPTLVYYY). Over 17-30 (AARNHWPFGTGFCK) the chain is Extracellular. A helical membrane pass occupies residues 31–51 (FVRFLFYWNLYCSVLFLTCIS). Over 52 to 74 (VHRYMGICHPLRALRWGRPRFAS) the chain is Cytoplasmic. A helical membrane pass occupies residues 75 to 95 (LLCLAVWLVVAGCLVPNLFFV). Residues 96–124 (TTSPNGTTILCHDTTRPEEFDHYVHFSSA) lie on the Extracellular side of the membrane. The N-linked (GlcNAc...) asparagine glycan is linked to N100. A helical membrane pass occupies residues 125–145 (VMVLLFGLPFLVTLVCYGLMA). Topologically, residues 146 to 165 (RRLYRPLPGAGQSSSRLRSL) are cytoplasmic.

This sequence belongs to the G-protein coupled receptor 1 family.

It localises to the cell membrane. Receptor for UTP and UDP coupled to G-proteins that activate a phosphatidylinositol-calcium second messenger system. This Cricetulus griseus (Chinese hamster) protein is P2Y purinoceptor 4 (P2RY4).